Reading from the N-terminus, the 166-residue chain is Putative 4-hydroxy-4-methyl-2-oxoglutarate aldolase 3 (166 aa).

Ala-2 is modified (N-acetylalanine). Substrate is bound by residues 81–84 and Arg-103; that span reads GGNL. Asp-104 serves as a coordination point for a divalent metal cation.

It belongs to the class II aldolase/RraA-like family. As to quaternary structure, homotrimer. It depends on a divalent metal cation as a cofactor.

The catalysed reaction is 4-hydroxy-4-methyl-2-oxoglutarate = 2 pyruvate. It carries out the reaction oxaloacetate + H(+) = pyruvate + CO2. Functionally, catalyzes the aldol cleavage of 4-hydroxy-4-methyl-2-oxoglutarate (HMG) into 2 molecules of pyruvate. Also contains a secondary oxaloacetate (OAA) decarboxylase activity due to the common pyruvate enolate transition state formed following C-C bond cleavage in the retro-aldol and decarboxylation reactions. The chain is Putative 4-hydroxy-4-methyl-2-oxoglutarate aldolase 3 from Arabidopsis thaliana (Mouse-ear cress).